Consider the following 259-residue polypeptide: Snake venom serine protease homolog rhinocerase 3 (259 aa).

An N-terminal signal peptide occupies residues 1-17 (VLIRVLANLLLLQLSYA). A propeptide spanning residues 18–23 (QESSEL) is cleaved from the precursor. The Peptidase S1 domain maps to 24-250 (VIGGDECDIN…YTDWIEGIIA (227 aa)). 6 cysteine pairs are disulfide-bonded: Cys30/Cys164, Cys51/Cys67, Cys99/Cys257, Cys143/Cys211, Cys175/Cys190, and Cys201/Cys226. A glycan (N-linked (GlcNAc...) asparagine) is linked at Asn80. Asn252 carries an N-linked (GlcNAc...) asparagine glycan.

This sequence belongs to the peptidase S1 family. Snake venom subfamily. Expressed by the venom gland.

Its subcellular location is the secreted. Its function is as follows. Snake venom serine protease homolog that may act in the hemostasis system of the prey. This is Snake venom serine protease homolog rhinocerase 3 from Bitis rhinoceros (West African gaboon viper).